The sequence spans 119 residues: Large ribosomal subunit protein uL24 (119 aa).

This sequence belongs to the universal ribosomal protein uL24 family. In terms of assembly, part of the 50S ribosomal subunit.

Functionally, one of two assembly initiator proteins, it binds directly to the 5'-end of the 23S rRNA, where it nucleates assembly of the 50S subunit. Its function is as follows. Located at the polypeptide exit tunnel on the outside of the subunit. This is Large ribosomal subunit protein uL24 from Methanococcus maripaludis (strain C5 / ATCC BAA-1333).